The following is a 287-amino-acid chain: Eukaryotic translation initiation factor 3 subunit G (287 aa).

A disordered region spans residues 163 to 207 (EEDLESKEKDTKLGPTVPGSGKYVAPGMRGDRPAVTGGAERRSEE). The RRM domain maps to 208-286 (NTCRVTNLPE…LVLKVEWTRF (79 aa)).

Belongs to the eIF-3 subunit G family. In terms of assembly, component of the eukaryotic translation initiation factor 3 (eIF-3) complex.

The protein resides in the cytoplasm. Its function is as follows. RNA-binding component of the eukaryotic translation initiation factor 3 (eIF-3) complex, which is involved in protein synthesis of a specialized repertoire of mRNAs and, together with other initiation factors, stimulates binding of mRNA and methionyl-tRNAi to the 40S ribosome. The eIF-3 complex specifically targets and initiates translation of a subset of mRNAs involved in cell proliferation. This subunit can bind 18S rRNA. The chain is Eukaryotic translation initiation factor 3 subunit G from Brugia malayi (Filarial nematode worm).